The sequence spans 102 residues: Small ribosomal subunit protein uS14 (102 aa).

Belongs to the universal ribosomal protein uS14 family. In terms of assembly, part of the 30S ribosomal subunit. Contacts proteins S3 and S10.

Its function is as follows. Binds 16S rRNA, required for the assembly of 30S particles and may also be responsible for determining the conformation of the 16S rRNA at the A site. In Wolbachia sp. subsp. Brugia malayi (strain TRS), this protein is Small ribosomal subunit protein uS14.